The following is a 461-amino-acid chain: Putative long chain fatty acid-CoA ligase VraA (461 aa).

This sequence belongs to the ATP-dependent AMP-binding enzyme family.

This is Putative long chain fatty acid-CoA ligase VraA (vraA) from Staphylococcus haemolyticus (strain JCSC1435).